The chain runs to 350 residues: tRNA pseudouridine synthase D (350 aa).

Asp79 functions as the Nucleophile in the catalytic mechanism. The region spanning 154 to 306 (GAPNYYGPQR…EQERRPIVLY (153 aa)) is the TRUD domain.

Belongs to the pseudouridine synthase TruD family.

It catalyses the reaction uridine(13) in tRNA = pseudouridine(13) in tRNA. In terms of biological role, responsible for synthesis of pseudouridine from uracil-13 in transfer RNAs. The chain is tRNA pseudouridine synthase D from Pseudoalteromonas atlantica (strain T6c / ATCC BAA-1087).